Consider the following 249-residue polypeptide: BPI fold-containing family A member 2 (249 aa).

A signal peptide spans 1–18; sequence MLQLWKLVLLCGVLTGTS. N124 and N132 each carry an N-linked (GlcNAc...) asparagine glycan. C174 and C217 are joined by a disulfide.

Belongs to the BPI/LBP/Plunc superfamily. Plunc family. As to expression, detected in submandibular gland. Secreted into saliva.

It is found in the secreted. Its function is as follows. Has strong antibacterial activity against P.aeruginosa. The protein is BPI fold-containing family A member 2 (BPIFA2) of Homo sapiens (Human).